We begin with the raw amino-acid sequence, 700 residues long: Methionine--tRNA ligase (700 aa).

The short motif at 12-22 is the 'HIGH' region element; the sequence is PYANGNFHIGH. The Zn(2+) site is built by C143, C146, C156, and C159. The 'KMSKS' region motif lies at 348–352; the sequence is KMSKS. ATP is bound at residue K351. One can recognise a tRNA-binding domain in the interval 594 to 700; the sequence is DFSKIDLRIA…AGAQPGMRVH (107 aa).

The protein belongs to the class-I aminoacyl-tRNA synthetase family. MetG type 1 subfamily. In terms of assembly, homodimer. Zn(2+) serves as cofactor.

It is found in the cytoplasm. It catalyses the reaction tRNA(Met) + L-methionine + ATP = L-methionyl-tRNA(Met) + AMP + diphosphate. Its function is as follows. Is required not only for elongation of protein synthesis but also for the initiation of all mRNA translation through initiator tRNA(fMet) aminoacylation. This Albidiferax ferrireducens (strain ATCC BAA-621 / DSM 15236 / T118) (Rhodoferax ferrireducens) protein is Methionine--tRNA ligase.